Reading from the N-terminus, the 122-residue chain is Flowering-promoting factor 1-like protein 3 (122 aa).

Residues 16 to 36 (ENPGSEESSSAGDGGGGGRRK) are disordered.

This sequence belongs to the FPF1 family.

The protein is Flowering-promoting factor 1-like protein 3 of Oryza sativa subsp. japonica (Rice).